A 907-amino-acid chain; its full sequence is Protein translocase subunit SecA (907 aa).

ATP-binding positions include Gln-87, Gly-105–Thr-109, and Asp-510. Positions 892, 894, 903, and 904 each coordinate Zn(2+).

This sequence belongs to the SecA family. As to quaternary structure, monomer and homodimer. Part of the essential Sec protein translocation apparatus which comprises SecA, SecYEG and auxiliary proteins SecDF-YajC and YidC. It depends on Zn(2+) as a cofactor.

It localises to the cell inner membrane. The protein localises to the cytoplasm. The enzyme catalyses ATP + H2O + cellular proteinSide 1 = ADP + phosphate + cellular proteinSide 2.. Part of the Sec protein translocase complex. Interacts with the SecYEG preprotein conducting channel. Has a central role in coupling the hydrolysis of ATP to the transfer of proteins into and across the cell membrane, serving both as a receptor for the preprotein-SecB complex and as an ATP-driven molecular motor driving the stepwise translocation of polypeptide chains across the membrane. This chain is Protein translocase subunit SecA, found in Acinetobacter baumannii (strain ATCC 17978 / DSM 105126 / CIP 53.77 / LMG 1025 / NCDC KC755 / 5377).